Here is a 1598-residue protein sequence, read N- to C-terminus: Fatty acid synthase subunit alpha (1598 aa).

Residues Arg96 to Val134 are disordered. Positions Ala104 to Lys115 are enriched in low complexity. In terms of domain architecture, Carrier spans Asp143–Thr221. Ser181 carries the O-(pantetheine 4'-phosphoryl)serine modification. A ketoreductase (KR) domain region spans residues Leu543–Ala784. The disordered stretch occupies residues Lys818–Pro844. Residues Asp820–His829 show a composition bias toward polar residues. One can recognise a Ketosynthase family 3 (KS3) domain in the interval His992–His1524. The For beta-ketoacyl synthase activity role is filled by Cys1175. The segment at Ala1280–Glu1301 is disordered. Active-site for beta-ketoacyl synthase activity residues include His1409 and His1450.

It belongs to the thiolase-like superfamily. Fungal fatty acid synthetase subunit alpha family. Fatty acid synthase is composed of alpha and beta subunits.

The catalysed reaction is acetyl-CoA + n malonyl-CoA + 2n NADPH + 4n H(+) = a long-chain-acyl-CoA + n CoA + n CO2 + 2n NADP(+).. It carries out the reaction a fatty acyl-[ACP] + malonyl-[ACP] + H(+) = a 3-oxoacyl-[ACP] + holo-[ACP] + CO2. It catalyses the reaction a (3R)-hydroxyacyl-[ACP] + NADP(+) = a 3-oxoacyl-[ACP] + NADPH + H(+). It participates in mycotoxin biosynthesis. Its function is as follows. Fatty acid synthase subunit alpha; part of the gene cluster that mediates the biosynthesis of gramillins A and B, bicyclic lipopeptides that induce cell death in maize leaves but not in wheat leaves. The nonribosomal peptide synthetase GRA1 incorporates respectively a glutamic adic (Glu), a leucine (Leu), a serine (Ser), a hydroxyglutamine (HOGln), a 2-amino decanoic acid, and 2 cysteins (CysB and CysA). The biosynthesis of 2-amino decanoic acid incorporated in gramillins could be initiated by a fatty acid synthase composed of the alpha and beta subunits FGSG_00036 and FGSG_11656. The cytochrome P450 monooxygenase FGSG_15680 could hydroxylate the fatty acid chain. Subsequent oxidation to the ketone by the oxidoreductase FGSG_00048 and transamination by aminotransferase FGSG_00049 could form 2-amino-decanoic acid. On the other hand, FGSG_15680 could also be responsible for the HO-modified glutamine at the gamma-position. Whether hydroxylation occurs on the fully assembled product or on the Gln residue prior to assembly into the gramillins requires further proof. The thioredoxin FGSG_00043 could also be required for the disulfide-bond formation between CysA and CysB. The specific involvement of the remaining proteins from the cluster is more difficult to discern, but could have broader regulatory (FGSG_00040 and FGSG_11657) or enzymatic functions (FGSG_00044 and FGSG_00045). The final C-domain of GRA1 does not possess the expected sequence of a termination CT domain, often implicated in macrocyclization and release of a cyclopeptidein fungal NRPs; and the thioesterase FGSG_00047 may act in concert with the terminal C-domain of GRA1 to catalyze the formation of the macrocyclic anhydride and release of the products. The sequence is that of Fatty acid synthase subunit alpha from Gibberella zeae (strain ATCC MYA-4620 / CBS 123657 / FGSC 9075 / NRRL 31084 / PH-1) (Wheat head blight fungus).